Reading from the N-terminus, the 1298-residue chain is Phosphoribosylformylglycinamidine synthase (1298 aa).

The disordered stretch occupies residues 303 to 327 (FPGAATGSGGEIRDEGATGRGAKPK). ATP contacts are provided by residues 305-316 (GAATGSGGEIRD), 384-386 (TGY), and A676. Mg(2+)-binding residues include D677, E716, N720, and D884. S886 contacts ATP. Residues 1045 to 1298 (VAVLREQGVN…MFRNARAWVN (254 aa)) enclose the Glutamine amidotransferase type-1 domain. The Nucleophile role is filled by C1138. Catalysis depends on residues H1263 and E1265.

It in the N-terminal section; belongs to the FGAMS family. As to quaternary structure, monomer.

It is found in the cytoplasm. It carries out the reaction N(2)-formyl-N(1)-(5-phospho-beta-D-ribosyl)glycinamide + L-glutamine + ATP + H2O = 2-formamido-N(1)-(5-O-phospho-beta-D-ribosyl)acetamidine + L-glutamate + ADP + phosphate + H(+). It functions in the pathway purine metabolism; IMP biosynthesis via de novo pathway; 5-amino-1-(5-phospho-D-ribosyl)imidazole from N(2)-formyl-N(1)-(5-phospho-D-ribosyl)glycinamide: step 1/2. Functionally, phosphoribosylformylglycinamidine synthase involved in the purines biosynthetic pathway. Catalyzes the ATP-dependent conversion of formylglycinamide ribonucleotide (FGAR) and glutamine to yield formylglycinamidine ribonucleotide (FGAM) and glutamate. The polypeptide is Phosphoribosylformylglycinamidine synthase (Pseudomonas savastanoi pv. phaseolicola (strain 1448A / Race 6) (Pseudomonas syringae pv. phaseolicola (strain 1448A / Race 6))).